The chain runs to 126 residues: Anti-adapter protein IraD (126 aa).

This sequence belongs to the GpW/Gp25 family. IraD subfamily. In terms of assembly, interacts with RssB.

The protein resides in the cytoplasm. Its function is as follows. Inhibits RpoS proteolysis by regulating RssB activity, thereby increasing the stability of the sigma stress factor RpoS during oxidative stress. Its effect on RpoS stability is due to its interaction with RssB, which probably blocks the interaction of RssB with RpoS, and the consequent delivery of the RssB-RpoS complex to the ClpXP protein degradation pathway. This is Anti-adapter protein IraD from Salmonella choleraesuis (strain SC-B67).